A 465-amino-acid polypeptide reads, in one-letter code: Deoxyguanosinetriphosphate triphosphohydrolase-like protein (465 aa).

Residues 1 to 22 (MKWDKLLNDKRRRESGVTRSKN) are disordered. The region spanning 63–252 (RLTHSMEVST…LEVADDIAYL (190 aa)) is the HD domain.

Belongs to the dGTPase family. Type 3 subfamily.

This chain is Deoxyguanosinetriphosphate triphosphohydrolase-like protein, found in Listeria innocua serovar 6a (strain ATCC BAA-680 / CLIP 11262).